Reading from the N-terminus, the 361-residue chain is Eukaryotic translation initiation factor 3 subunit F (361 aa).

2 stretches are compositionally biased toward low complexity: residues 1–11 (MATPVVSASGP) and 21–42 (AAPA…AAAV). A disordered region spans residues 1–42 (MATPVVSASGPPATPAPAPVAAPASASASVPAPTPAPAAAAV). Alanine 2 is modified (N-acetylalanine). Serine 50 is modified (phosphoserine; by CDK11; in vitro). Residues 55–78 (AAAATTAAPGQTPASAQAPAQTPA) are compositionally biased toward low complexity. The disordered stretch occupies residues 55–86 (AAAATTAAPGQTPASAQAPAQTPAPALPGPAL). In terms of domain architecture, MPN spans 96 to 226 (VRLHPVILAS…IKAYVSTLMG (131 aa)). Position 242 is an N6-acetyllysine (lysine 242). Serine 262 is subject to Phosphoserine.

It belongs to the eIF-3 subunit F family. Component of the eukaryotic translation initiation factor 3 (eIF-3) complex, which is composed of 13 subunits: EIF3A, EIF3B, EIF3C, EIF3D, EIF3E, EIF3F, EIF3G, EIF3H, EIF3I, EIF3J, EIF3K, EIF3L and EIF3M. The eIF-3 complex appears to include 3 stable modules: module A is composed of EIF3A, EIF3B, EIF3G and EIF3I; module B is composed of EIF3F, EIF3H, and EIF3M; and module C is composed of EIF3C, EIF3D, EIF3E, EIF3K and EIF3L. EIF3C of module C binds EIF3B of module A and EIF3H of module B, thereby linking the three modules. EIF3J is a labile subunit that binds to the eIF-3 complex via EIF3B. The eIF-3 complex interacts with RPS6KB1 under conditions of nutrient depletion. Mitogenic stimulation leads to binding and activation of a complex composed of MTOR and RPTOR, leading to phosphorylation and release of RPS6KB1 and binding of EIF4B to eIF-3. Interacts with RNF139; the interaction leads to protein translation inhibitions in a ubiquitination-dependent manner. Interacts with DTX1, the interaction is required for deubiquitinating activity towards NOTCH1. In terms of processing, phosphorylation is enhanced upon serum stimulation. Phosphorylated during apoptosis by caspase-processed CDK11.

Its subcellular location is the cytoplasm. The catalysed reaction is Thiol-dependent hydrolysis of ester, thioester, amide, peptide and isopeptide bonds formed by the C-terminal Gly of ubiquitin (a 76-residue protein attached to proteins as an intracellular targeting signal).. Its function is as follows. Component of the eukaryotic translation initiation factor 3 (eIF-3) complex, which is required for several steps in the initiation of protein synthesis. The eIF-3 complex associates with the 40S ribosome and facilitates the recruitment of eIF-1, eIF-1A, eIF-2:GTP:methionyl-tRNAi and eIF-5 to form the 43S pre-initiation complex (43S PIC). The eIF-3 complex stimulates mRNA recruitment to the 43S PIC and scanning of the mRNA for AUG recognition. The eIF-3 complex is also required for disassembly and recycling of post-termination ribosomal complexes and subsequently prevents premature joining of the 40S and 60S ribosomal subunits prior to initiation. The eIF-3 complex specifically targets and initiates translation of a subset of mRNAs involved in cell proliferation, including cell cycling, differentiation and apoptosis, and uses different modes of RNA stem-loop binding to exert either translational activation or repression. Deubiquitinates activated NOTCH1, promoting its nuclear import, thereby acting as a positive regulator of Notch signaling. The chain is Eukaryotic translation initiation factor 3 subunit F from Macaca fascicularis (Crab-eating macaque).